The chain runs to 418 residues: Alpha-1-antitrypsin (418 aa).

A signal peptide spans 1 to 24 (MPSSVSWGILLLAGLCCLVPVSLA). S38 carries the phosphoserine modification. 3 N-linked (GlcNAc...) asparagine glycosylation sites follow: N70, N107, and N271. The tract at residues 373–392 (GAMFLEAIPMSIPPEVKFNK) is RCL. The residue at position 383 (S383) is a Phosphoserine.

Belongs to the serpin family. In terms of assembly, interacts with CELA2A. Interacts with ERGIC3 and LMAN1/ERGIC53. Interacts with PRSS1/Trypsin. Plasma.

It localises to the secreted. Functionally, inhibitor of serine proteases. Its primary target is elastase, but it also has a moderate affinity for plasmin and thrombin. Inhibits trypsin, chymotrypsin and plasminogen activator. The protein is Alpha-1-antitrypsin (SERPINA1) of Pongo abelii (Sumatran orangutan).